A 319-amino-acid chain; its full sequence is Mitochondrial fission regulator 1-like-A (319 aa).

The tract at residues 1–37 (MASLGAAAEPERNLFGKDEAEAYESPEGRRSGRKKRT) is disordered. Residues 9 to 30 (EPERNLFGKDEAEAYESPEGRR) show a composition bias toward basic and acidic residues.

Belongs to the MTFR1 family.

It is found in the mitochondrion outer membrane. Functionally, mitochondrial protein required for adaptation of miochondrial dynamics to metabolic changes. Regulates mitochondrial morphology at steady state and mediates AMPK-dependent stress-induced mitochondrial fragmentation via the control of OPA1 levels. This is Mitochondrial fission regulator 1-like-A (mtfr1l-a) from Xenopus laevis (African clawed frog).